Consider the following 215-residue polypeptide: Porin MspB (215 aa).

Residues 1 to 31 form the signal peptide; the sequence is MTAFKRVLIAMISALLAGTTGMFVSAGAAHA.

The protein belongs to the mycobacterial porin (TC 1.B.24) family. In terms of assembly, octamers. Probably forms a goblet with the wide end on the exterior of the outer membrane and a central channel. It is not known if mixed oligomers of MspB with other Msp subunits form in vivo.

It is found in the cell outer membrane. Its subcellular location is the secreted. It localises to the cell wall. A backup porin induced when MspA, the major porin, is deleted. Probably forms a water-filled channel which favors the permeation of cations. There are about 2400 porins in wild-type, 800 in an mspA deletion and 150 in a double mspA-mspC deletion. A triple mspA-mspC-mspD deletion mutant has low but detectable channel activity. Different conductance values with maxima at 2.3 and 4.6 nanosiemens might be caused by a simultaneous reconstitution of MspB channels into the membrane or by the existence of different MspB conformations. This chain is Porin MspB (mspB), found in Mycolicibacterium smegmatis (strain ATCC 700084 / mc(2)155) (Mycobacterium smegmatis).